The sequence spans 340 residues: Mitochondrial calcium uniporter regulator 1 (340 aa).

A disordered region spans residues 1–44 (MDSGSVAAERPRRTPSRQRLPSSGCGVPARPGVSTLPGGRSWLR). At 1–54 (MDSGSVAAERPRRTPSRQRLPSSGCGVPARPGVSTLPGGRSWLRPRGRAARASP) the chain is on the mitochondrial intermembrane side. The chain crosses the membrane as a helical span at residues 55–74 (LLFLLLVPSPRLAATATATA). At 75–316 (PRRTLAERSR…KTMLEAHKLD (242 aa)) the chain is on the mitochondrial matrix side. The stretch at 197–291 (ALQQVLSKIA…VSLHAQQDRA (95 aa)) forms a coiled coil. Residue lysine 204 is modified to N6-acetyllysine. The chain crosses the membrane as a helical span at residues 317 to 339 (TIKYLAGSVFTCLTVALGFYRLW). Position 340 (isoleucine 340) is a topological domain, mitochondrial intermembrane.

It belongs to the CCDC90 family. Interacts (via coiled coil regions) with MCU; the interaction is direct. Interacts with SMDT1/EMRE; the interaction is direct. Interacts with PPIF.

The protein localises to the mitochondrion inner membrane. Key regulator of mitochondrial calcium uniporter (MCU) required for calcium entry into mitochondrion. Plays a direct role in uniporter-mediated calcium uptake via a direct interaction with MCU. Probably involved in the assembly of the membrane components of the uniporter complex (uniplex). This chain is Mitochondrial calcium uniporter regulator 1, found in Mus musculus (Mouse).